The primary structure comprises 319 residues: ATP-dependent 6-phosphofructokinase (319 aa).

An ATP-binding site is contributed by Gly-11. 21–25 (RAVVR) contacts ADP. ATP is bound by residues 72–73 (RY) and 102–105 (GDGS). Asp-103 provides a ligand contact to Mg(2+). 125 to 127 (TID) provides a ligand contact to substrate. Asp-127 serves as the catalytic Proton acceptor. ADP is bound at residue Arg-154. Substrate is bound by residues Arg-162 and 169-171 (MGR). Residues 185–187 (GAE), Arg-211, and 213–215 (KKH) contribute to the ADP site. Substrate contacts are provided by residues Glu-222, Arg-243, and 249–252 (HVQR).

Belongs to the phosphofructokinase type A (PFKA) family. ATP-dependent PFK group I subfamily. Prokaryotic clade 'B1' sub-subfamily. Homotetramer. Requires Mg(2+) as cofactor.

Its subcellular location is the cytoplasm. It catalyses the reaction beta-D-fructose 6-phosphate + ATP = beta-D-fructose 1,6-bisphosphate + ADP + H(+). It participates in carbohydrate degradation; glycolysis; D-glyceraldehyde 3-phosphate and glycerone phosphate from D-glucose: step 3/4. Its activity is regulated as follows. Allosterically activated by ADP and other diphosphonucleosides, and allosterically inhibited by phosphoenolpyruvate. Functionally, catalyzes the phosphorylation of D-fructose 6-phosphate to fructose 1,6-bisphosphate by ATP, the first committing step of glycolysis. This is ATP-dependent 6-phosphofructokinase from Listeria monocytogenes serotype 4b (strain CLIP80459).